Reading from the N-terminus, the 252-residue chain is Phosphate import ATP-binding protein PstB 2 (252 aa).

The ABC transporter domain occupies 6 to 247; that stretch reads ISINDLSVYF…PQHKETEDYI (242 aa). ATP is bound at residue 38–45; sequence GPSGSGKS.

The protein belongs to the ABC transporter superfamily. Phosphate importer (TC 3.A.1.7) family. The complex is composed of two ATP-binding proteins (PstB), two transmembrane proteins (PstC and PstA) and a solute-binding protein (PstS).

It is found in the cell membrane. The catalysed reaction is phosphate(out) + ATP + H2O = ADP + 2 phosphate(in) + H(+). Part of the ABC transporter complex PstSACB involved in phosphate import. Responsible for energy coupling to the transport system. This is Phosphate import ATP-binding protein PstB 2 from Streptococcus thermophilus (strain CNRZ 1066).